Consider the following 229-residue polypeptide: PKHD-type hydroxylase RPD_3334 (229 aa).

Residues glutamine 78 to serine 180 form the Fe2OG dioxygenase domain. Positions 98, 100, and 161 each coordinate Fe cation. Arginine 171 contacts 2-oxoglutarate.

Fe(2+) serves as cofactor. The cofactor is L-ascorbate.

The protein is PKHD-type hydroxylase RPD_3334 of Rhodopseudomonas palustris (strain BisB5).